Consider the following 534-residue polypeptide: NAD(P)H-quinone oxidoreductase chain 4 2 (534 aa).

The next 13 membrane-spanning stretches (helical) occupy residues 6–26, 38–58, 93–113, 117–137, 138–158, 171–191, 210–230, 245–265, 279–299, 313–333, 335–355, 377–399, and 419–439; these read FPWLTTIILLPIVAALFIPLL, WYSLIVGLVDFILLVVAFWTS, LILLTGFISTLAMLAAWPVTF, FFYFLMLAMYGGQILVFAVQD, LLVFFFAWELELIPVYLLLAI, FILYTAGSSLFILVASLAMAF, IGFQLLLYAGFLIAYGVKLPI, TAPVHMLLAGILLKMGGYALF, FAPILVLLGVVNILYAALTSF, ISHMGFVLIGLGSFTQLGLSG, MLQMVSHGLIGASLFFLVGAT, MFAMWTTCAMASLALPGMSGFVA, and VVVISLAAIGVILTPIYLLSM.

This sequence belongs to the complex I subunit 4 family.

Its subcellular location is the cellular thylakoid membrane. The catalysed reaction is a plastoquinone + NADH + (n+1) H(+)(in) = a plastoquinol + NAD(+) + n H(+)(out). It catalyses the reaction a plastoquinone + NADPH + (n+1) H(+)(in) = a plastoquinol + NADP(+) + n H(+)(out). In terms of biological role, NDH-1 shuttles electrons from NAD(P)H, via FMN and iron-sulfur (Fe-S) centers, to quinones in the respiratory chain. The immediate electron acceptor for the enzyme in this species is believed to be plastoquinone. Couples the redox reaction to proton translocation (for every two electrons transferred, four hydrogen ions are translocated across the cytoplasmic membrane), and thus conserves the redox energy in a proton gradient. This chain is NAD(P)H-quinone oxidoreductase chain 4 2, found in Synechococcus elongatus (strain ATCC 33912 / PCC 7942 / FACHB-805) (Anacystis nidulans R2).